The chain runs to 237 residues: 7-cyano-7-deazaguanine synthase (237 aa).

15 to 25 is a binding site for ATP; the sequence is LSGGMDSTVCA. Zn(2+)-binding residues include cysteine 197, cysteine 205, cysteine 208, and cysteine 211.

Belongs to the QueC family. Requires Zn(2+) as cofactor.

The catalysed reaction is 7-carboxy-7-deazaguanine + NH4(+) + ATP = 7-cyano-7-deazaguanine + ADP + phosphate + H2O + H(+). The protein operates within purine metabolism; 7-cyano-7-deazaguanine biosynthesis. Catalyzes the ATP-dependent conversion of 7-carboxy-7-deazaguanine (CDG) to 7-cyano-7-deazaguanine (preQ(0)). The polypeptide is 7-cyano-7-deazaguanine synthase (Koribacter versatilis (strain Ellin345)).